Here is a 62-residue protein sequence, read N- to C-terminus: Rhodotorucin-A peptides type 1 (62 aa).

Residues 1 to 3 constitute a propeptide that is removed on maturation; that stretch reads MVA. The S-farnesyl cysteine moiety is linked to residue Cys-14. A propeptide spanning residues 15–18 is cleaved from the precursor; the sequence is TVSK. Cys-29 is lipidated: S-farnesyl cysteine. Residues 30 to 33 constitute a propeptide that is removed on maturation; sequence TVSK. A lipid anchor (S-farnesyl cysteine) is attached at Cys-44. The propeptide occupies 45–48; it reads TVSK. The S-farnesyl cysteine moiety is linked to residue Cys-59. The propeptide occupies 60–62; the sequence is TVA.

The protein localises to the cell membrane. Functionally, rhodotorucin-A is a mating pheromone in cells of mating type A of Rhodosporidium toruloides. The chain is Rhodotorucin-A peptides type 1 (RHA1) from Rhodotorula toruloides (Yeast).